A 277-amino-acid polypeptide reads, in one-letter code: Large ribosomal subunit protein uL2 (277 aa).

The tract at residues 212–277 (RWRGKRPHVR…KFIVRGRKSK (66 aa)) is disordered. Residues 254–277 (TAGKKTRDKKKASTKFIVRGRKSK) are compositionally biased toward basic residues.

The protein belongs to the universal ribosomal protein uL2 family. In terms of assembly, part of the 50S ribosomal subunit. Forms a bridge to the 30S subunit in the 70S ribosome.

One of the primary rRNA binding proteins. Required for association of the 30S and 50S subunits to form the 70S ribosome, for tRNA binding and peptide bond formation. It has been suggested to have peptidyltransferase activity; this is somewhat controversial. Makes several contacts with the 16S rRNA in the 70S ribosome. This chain is Large ribosomal subunit protein uL2, found in Leuconostoc citreum (strain KM20).